Consider the following 727-residue polypeptide: Ankyrin repeat domain-containing protein 6 (727 aa).

8 ANK repeats span residues 9–38 (ALSE…RVAV), 41–70 (HGRT…DLDV), 74–103 (GDQT…ALDR), 107–136 (DGNT…NVLA), 140–169 (AGNT…RADL), 173–202 (AGDT…SVHE), 206–235 (AGDT…DTTI), and 239–268 (AGQT…VLRF). Residues 277–386 (KRERLKEERR…HRCSSPPPPH (110 aa)) are disordered. Positions 280 to 296 (RLKEERRAQSVPRDEVA) are enriched in basic and acidic residues. The span at 298-312 (SKGSVSAGDTPSSEQ) shows a compositional bias: polar residues. Basic and acidic residues predominate over residues 314–324 (VARKEEAREEF). Basic residues predominate over residues 363–379 (KNLHAHNHPKKRNRHRC). Residues 417–446 (LINKLENQLEATVEEIKAELGSVQDKMNTK) adopt a coiled-coil conformation. The span at 548 to 557 (PAAASDSSPP) shows a compositional bias: low complexity. Disordered stretches follow at residues 548–586 (PAAA…CTGS) and 601–657 (NEAA…TGPH). Residues 566 to 584 (LNSTATQRLQQELSSSDCT) show a composition bias toward polar residues. The segment covering 622–633 (KSGKSGPTRHRA) has biased composition (basic residues). Positions 682–727 (WYERKIEEARSQANQKAQQDKATLKEHIKSLEEELAKLRTRVQKEN) form a coiled coil.

As to quaternary structure, interacts with AXN1, AXN2 and CSNK1E/CKI-epsilon.

In terms of biological role, recruits CKI-epsilon to the beta-catenin degradation complex that consists of AXN1 or AXN2 and GSK3-beta and allows efficient phosphorylation of beta-catenin, thereby inhibiting beta-catenin/Tcf signals. The protein is Ankyrin repeat domain-containing protein 6 (ANKRD6) of Homo sapiens (Human).